Consider the following 454-residue polypeptide: MRSCTVSTMPRMICRNADLEFDWLQPCFYPDEDDFYFSGPNSTPPGEDIWKKFELLPTPPLSPSCAFLELSTEPSDWASEMMLTEADLWGNPDEEDVFGPGGLGSLTPNPVILRDCMWSGFSAREKLERAMSEKMQHGHEPAATGPATQVPGAGAASPAGRGHSGTAGAALPAELAHPAAECVDPAVVFLLPVSKRNPVPVRVAPARAPARASAVGAAVARAAAPATAAVAAPPGLSSRPPNGGDHKVLSTSGEDALSDEVDEEEDEEEEIDVVTVEKSCKTGGTTFTLTVSPKNTALGLGREQSRELILQRSVPIYQQHNYAAPSPYVESEDAPPQKKIKREVSPHPLKSVIHPKGKSFSPRKSDSEDSVRRRNHNILERQRRNDLRSSFTTLRDHVPELVKNEKAAKVVILKKACEYVHYLQAKEHQLLMEKEKLQARQQQLLKIIELAWTF.

3 disordered regions span residues 132–166 (SEKM…HSGT), 230–269 (VAAP…DEEE), and 325–374 (PSPY…VRRR). Positions 151–161 (PGAGAASPAGR) are enriched in low complexity. A compositionally biased stretch (acidic residues) spans 256-269 (ALSDEVDEEEDEEE). A compositionally biased stretch (basic and acidic residues) spans 363–374 (RKSDSEDSVRRR). One can recognise a bHLH domain in the interval 371–423 (VRRRNHNILERQRRNDLRSSFTTLRDHVPELVKNEKAAKVVILKKACEYVHYL). The segment at 423-444 (LQAKEHQLLMEKEKLQARQQQL) is leucine-zipper.

Efficient DNA binding requires dimerization with another bHLH protein.

It localises to the nucleus. The sequence is that of N-myc 2 proto-oncogene protein (N-MYC2) from Marmota monax (Woodchuck).